Here is a 389-residue protein sequence, read N- to C-terminus: MLKRHQQLLFRLIRQSVLHQSSPTSSSASSTLLNSENGEKFVKTVVDRLAQCQAGNATAAPEQISYWESISKQSAKVSDGRSELSQLRTIINDPKETEEMRKLAEVDVESIEENLETELQELAVKIVPLNNLDVLSKCQIELSCGAGGQEAMLFTGELLDMYQKLAAVNSWKWDPLQVDNVPLGGVRSALIAVSGEKVYAKMRFEAGVHRVQRVPVNDSRMHTSTASISVLPEPEEVSVVVPSDSVKIEAMRASGPGGQNVNKRSTAVRMTHKETGIAVHCMDERFQHLNIQIAYKRLAAILMQKQVDAMLEKIVSKRKLQVGSKARAEKIRTYNFQHDRVTDHRIQMSITGVAEFLSAGETLQTMIERLQEQHLEDRLDHIIENCIVE.

Q259 carries the N5-methylglutamine modification.

This sequence belongs to the prokaryotic/mitochondrial release factor family. Methylation of glutamine in the GGQ triplet is conserved from bacteria to mammals.

Its subcellular location is the mitochondrion. Functionally, mitochondrial peptide chain release factor that directs the termination of translation in response to the peptide chain termination codons UAA and UAG. The chain is Probable peptide chain release factor 1, mitochondrial from Caenorhabditis elegans.